Reading from the N-terminus, the 237-residue chain is Ribose-5-phosphate isomerase A (237 aa).

Residues 33 to 36, 88 to 91, and 101 to 104 each bind substrate; these read TGST, DGAD, and KGRG. E110 acts as the Proton acceptor in catalysis. K128 is a substrate binding site.

The protein belongs to the ribose 5-phosphate isomerase family. As to quaternary structure, homodimer.

The catalysed reaction is aldehydo-D-ribose 5-phosphate = D-ribulose 5-phosphate. The protein operates within carbohydrate degradation; pentose phosphate pathway; D-ribose 5-phosphate from D-ribulose 5-phosphate (non-oxidative stage): step 1/1. In terms of biological role, catalyzes the reversible conversion of ribose-5-phosphate to ribulose 5-phosphate. The protein is Ribose-5-phosphate isomerase A of Methanoregula boonei (strain DSM 21154 / JCM 14090 / 6A8).